The chain runs to 372 residues: Protein REVEILLE 7 (372 aa).

The HTH myb-type domain occupies 71-125 (TVTKQREKWSEEEHDRFLEAIKLYGRGWRQIQEHIGTKTAVQIRSHAQKFFSKMA). A DNA-binding region (H-T-H motif) is located at residues 98–121 (WRQIQEHIGTKTAVQIRSHAQKFF). The disordered stretch occupies residues 124-204 (MAQEADSRSE…RCSSPNSCTS (81 aa)). A compositionally biased stretch (basic residues) spans 145–155 (RPKRKPAHPYP). Positions 156-169 (RKSPVPYTQSPPPN) are enriched in pro residues. Positions 178-204 (KSPTSVLSSFGSEDQVNRCSSPNSCTS) are enriched in polar residues.

The protein resides in the nucleus. Functionally, transcription factor involved in phytochrome A-mediated cotyledon opening. Controlled by the central oscillator mediated by LHY and CCA1. Part of a regulatory circadian feedback loop. Regulates its own expression. This is Protein REVEILLE 7 (RVE7) from Arabidopsis thaliana (Mouse-ear cress).